A 955-amino-acid polypeptide reads, in one-letter code: Valine--tRNA ligase (955 aa).

A 'HIGH' region motif is present at residues 41 to 51 (PNITGSLHMGH). Positions 554–558 (KMSKS) match the 'KMSKS' region motif. K557 contributes to the ATP binding site. Positions 926–946 (QEKNKLLKLNEINLKLSEQIK) form a coiled coil.

This sequence belongs to the class-I aminoacyl-tRNA synthetase family. ValS type 1 subfamily. Monomer.

Its subcellular location is the cytoplasm. It carries out the reaction tRNA(Val) + L-valine + ATP = L-valyl-tRNA(Val) + AMP + diphosphate. In terms of biological role, catalyzes the attachment of valine to tRNA(Val). As ValRS can inadvertently accommodate and process structurally similar amino acids such as threonine, to avoid such errors, it has a 'posttransfer' editing activity that hydrolyzes mischarged Thr-tRNA(Val) in a tRNA-dependent manner. In Buchnera aphidicola subsp. Acyrthosiphon pisum (strain APS) (Acyrthosiphon pisum symbiotic bacterium), this protein is Valine--tRNA ligase.